The chain runs to 614 residues: Allergen Ara h 1, clone P17 (614 aa).

The signal sequence occupies residues 1–25 (MRGRVSPLMLLLGILVLASVSATQA). 4 disordered regions span residues 72 to 177 (DTGA…RRFS), 334 to 356 (NAGGEQEERGQRRRSTRSSDNEG), 372 to 397 (HAKSVSKKGSEEEDITNPINLRDGEP), and 464 to 491 (KEQQQRGRREQEWEEEEEDEEEEGSNRE). Basic and acidic residues predominate over residues 81–132 (PPGERTRGRQPGDYDDDRRQPRREEGGRWGPAEPREREREEDWRQPREDWRR). Residues 169-327 (FYFPSRRFST…AFNAEFNEIR (159 aa)) enclose the Cupin type-1 1 domain. Residues 390–566 (INLRDGEPDL…AFPGSGEQVE (177 aa)) enclose the Cupin type-1 2 domain. Residues 464 to 474 (KEQQQRGRREQ) show a composition bias toward basic and acidic residues. The span at 475 to 486 (EWEEEEEDEEEE) shows a compositional bias: acidic residues. A glycan (N-linked (GlcNAc...) asparagine) is linked at asparagine 516. A disordered region spans residues 572–614 (QRESHFVSARPQSQSPSSPEKEDQEEENQGGKGPLLSILKAFN).

This sequence belongs to the 7S seed storage protein family.

This Arachis hypogaea (Peanut) protein is Allergen Ara h 1, clone P17.